Here is a 722-residue protein sequence, read N- to C-terminus: Polyribonucleotide nucleotidyltransferase (722 aa).

2 residues coordinate Mg(2+): D487 and D493. The 60-residue stretch at 554–613 (PRIETFKIPTDKIREVIGTGGKVIREIVEKTGAKVNIEDDGTVKVASSDGESIKAAIKWI) folds into the KH domain. The 69-residue stretch at 623-691 (GEIYEGTVVK…DRGKTRLSMK (69 aa)) folds into the S1 motif domain. Residues 697–722 (TGEDLEAKQKAEAKAEGEAPAQAAGE) form a disordered region. Residues 701–713 (LEAKQKAEAKAEG) show a composition bias toward basic and acidic residues.

Belongs to the polyribonucleotide nucleotidyltransferase family. Mg(2+) is required as a cofactor.

It is found in the cytoplasm. It catalyses the reaction RNA(n+1) + phosphate = RNA(n) + a ribonucleoside 5'-diphosphate. Involved in mRNA degradation. Catalyzes the phosphorolysis of single-stranded polyribonucleotides processively in the 3'- to 5'-direction. In Rhodopseudomonas palustris (strain ATCC BAA-98 / CGA009), this protein is Polyribonucleotide nucleotidyltransferase.